A 402-amino-acid polypeptide reads, in one-letter code: MVTLITEKLQNQSLDDLTRRACEAGPYSAEKLNKSGHLFPLEISVDKSPWKALRGGWPTGSQAASGPFSVGPHGVSHTEGLKWQLESPGPMDVGHFLDLHDSTGPPAAPPTKRHCRSLSEPEELARCRSPWRPGSSKVWTPISKRRCNSGGSATLQCCSGVGNPTLQGTLVPGLPRRPVSPAGPTSPLTPRPASASSGFVDGSEGSTSSGPPWLSTGPCPFSSRRRLSLSQEHLVDTGACLPSASSTPTSTPELGRHHGLLRCRSQPCVLDGRRVRRKRRREEDARWTRPSLDFLKMTRTLKNSKSLCSLDYEDDEDDTQEKTLVSSPCNSQGLVGIITPSSSPRIPRPGPDSPSIWASGEPEANPGEGGSSGDPSDWDSAGEEGIFPLDHGDLDLEQIENN.

At S119 the chain carries Phosphoserine. The tract at residues 170-215 (LVPGLPRRPVSPAGPTSPLTPRPASASSGFVDGSEGSTSSGPPWLS) is disordered. Residues 273-281 (RRVRRKRRR) carry the Nuclear localization signal motif. Phosphoserine is present on residues S306 and S309. Over residues 323–333 (TLVSSPCNSQG) the composition is skewed to polar residues. Positions 323–402 (TLVSSPCNSQ…DLDLEQIENN (80 aa)) are disordered. Positions 336-345 (GIITPSSSPR) are enriched in low complexity.

It belongs to the FAM53 family.

It localises to the nucleus. May play an important role in neural development; the dorsomedial roof of the third ventricle. This is Protein FAM53A from Mus musculus (Mouse).